The following is a 219-amino-acid chain: GPI ethanolamine phosphate transferase, stabilizing subunit (219 aa).

Helical transmembrane passes span 11–31 (YTHLLCIFSIILSVFIPSLFL), 42–62 (TWLCICSGFVTAVNLVLYLVV), 86–106 (YFLMSCFSFHVIFVLYGAPLI), 113–133 (FLFAVILSTFTTVPCLCLLGP), 155–175 (LQITTISSFVGAWLGALPIPL), and 189–209 (TLGATFGYVAGLVISPLWIYW).

The protein belongs to the PIGF family. In terms of assembly, part of the ethanolamine phosphate transferase 3 complex composed by PIGO and PIGF. Part of the ethanolamine phosphate transferase 2 complex with PIGG. PIGF is required to stabilize PIGG and PIGO.

It is found in the endoplasmic reticulum membrane. It functions in the pathway glycolipid biosynthesis; glycosylphosphatidylinositol-anchor biosynthesis. Its function is as follows. Stabilizing subunit of the ethanolamine phosphate transferase 3 and ethanolamine phosphate transferase 2 complexes that sequentially transfer an ethanolamine phosphate (EtNP) from a phosphatidylethanolamine (PE) to the 6-OH position of the third alpha-1,2-linked mannose and the second alpha-1,6-linked mannose of the alpha-D-Man-(1-&gt;2)-alpha-D-Man-(1-&gt;6)-2-PEtn-alpha-D-Man-(1-&gt;4)-alpha-D-GlcN-(1-&gt;6)-(1-radyl,2-acyl-sn-glycero-3-phospho)-2-acyl-inositol (also termed H6) intermediate to generate a 6-PEtn-alpha-D-Man-(1-&gt;2)-6-PEtn-alpha-D-Man-(1-&gt;6)-2-PEtn-alpha-D-Man-(1-&gt;4)-alpha-D-GlcN-(1-&gt;6)-(1-radyl,2-acyl-sn-glycero-3-phospho)-2-acyl-inositol (also termed H8). Participates in the tenth and eleventh steps of the glycosylphosphatidylinositol-anchor biosynthesis, in association with PIGO and PIGG, respectively. The sequence is that of GPI ethanolamine phosphate transferase, stabilizing subunit from Homo sapiens (Human).